Here is a 263-residue protein sequence, read N- to C-terminus: 3-methyl-2-oxobutanoate hydroxymethyltransferase (263 aa).

Mg(2+)-binding residues include aspartate 45 and aspartate 84. 3-methyl-2-oxobutanoate-binding positions include 45-46 (DS), aspartate 84, and lysine 112. Glutamate 114 lines the Mg(2+) pocket. Residue glutamate 180 is the Proton acceptor of the active site.

Belongs to the PanB family. As to quaternary structure, homodecamer; pentamer of dimers. Mg(2+) is required as a cofactor.

The protein localises to the cytoplasm. The catalysed reaction is 3-methyl-2-oxobutanoate + (6R)-5,10-methylene-5,6,7,8-tetrahydrofolate + H2O = 2-dehydropantoate + (6S)-5,6,7,8-tetrahydrofolate. The protein operates within cofactor biosynthesis; (R)-pantothenate biosynthesis; (R)-pantoate from 3-methyl-2-oxobutanoate: step 1/2. Functionally, catalyzes the reversible reaction in which hydroxymethyl group from 5,10-methylenetetrahydrofolate is transferred onto alpha-ketoisovalerate to form ketopantoate. The chain is 3-methyl-2-oxobutanoate hydroxymethyltransferase from Salmonella enteritidis PT4 (strain P125109).